The chain runs to 223 residues: Large ribosomal subunit protein uL4c (223 aa).

The disordered stretch occupies residues 61-96 (TKTRSEVEGGGKKPWKQKGTGNARAGSSNSPLWKGG).

This sequence belongs to the universal ribosomal protein uL4 family. As to quaternary structure, part of the 50S ribosomal subunit.

The protein resides in the plastid. Its subcellular location is the chloroplast. Probably binds the 23S rRNA. In Guillardia theta (Cryptophyte), this protein is Large ribosomal subunit protein uL4c (rpl4).